Here is a 94-residue protein sequence, read N- to C-terminus: MLKPLGDRVVLKIEEKEQTVGGFVLAGSAQEKTKTAQVVATGQGVRTLNGDLVAPSVKTGDRVLVEAHAGLDVKDGDEKYIIVGEANILAIIEE.

This sequence belongs to the GroES chaperonin family. Heptamer of 7 subunits arranged in a ring. Interacts with the chaperonin GroEL.

Its subcellular location is the cytoplasm. Its function is as follows. Together with the chaperonin GroEL, plays an essential role in assisting protein folding. The GroEL-GroES system forms a nano-cage that allows encapsulation of the non-native substrate proteins and provides a physical environment optimized to promote and accelerate protein folding. GroES binds to the apical surface of the GroEL ring, thereby capping the opening of the GroEL channel. The chain is Co-chaperonin GroES from Streptococcus pneumoniae (strain Hungary19A-6).